We begin with the raw amino-acid sequence, 520 residues long: GMP synthase [glutamine-hydrolyzing] (520 aa).

The Glutamine amidotransferase type-1 domain maps to 9–202; sequence SVLIVDFGSQ…IHNIAGIKGD (194 aa). Catalysis depends on C86, which acts as the Nucleophile. Residues H176 and E178 contribute to the active site. Residues 203-395 form the GMPS ATP-PPase domain; sequence WSMSAYRQKA…LGLPDSFIGR (193 aa). 230–236 contacts ATP; sequence SGGVDSS.

In terms of assembly, homodimer.

It carries out the reaction XMP + L-glutamine + ATP + H2O = GMP + L-glutamate + AMP + diphosphate + 2 H(+). The protein operates within purine metabolism; GMP biosynthesis; GMP from XMP (L-Gln route): step 1/1. In terms of biological role, catalyzes the synthesis of GMP from XMP. This Rhizobium johnstonii (strain DSM 114642 / LMG 32736 / 3841) (Rhizobium leguminosarum bv. viciae) protein is GMP synthase [glutamine-hydrolyzing].